A 958-amino-acid chain; its full sequence is Glycine dehydrogenase (decarboxylating) (958 aa).

Lys708 bears the N6-(pyridoxal phosphate)lysine mark.

It belongs to the GcvP family. The glycine cleavage system is composed of four proteins: P, T, L and H. It depends on pyridoxal 5'-phosphate as a cofactor.

It catalyses the reaction N(6)-[(R)-lipoyl]-L-lysyl-[glycine-cleavage complex H protein] + glycine + H(+) = N(6)-[(R)-S(8)-aminomethyldihydrolipoyl]-L-lysyl-[glycine-cleavage complex H protein] + CO2. The glycine cleavage system catalyzes the degradation of glycine. The P protein binds the alpha-amino group of glycine through its pyridoxal phosphate cofactor; CO(2) is released and the remaining methylamine moiety is then transferred to the lipoamide cofactor of the H protein. This Photorhabdus laumondii subsp. laumondii (strain DSM 15139 / CIP 105565 / TT01) (Photorhabdus luminescens subsp. laumondii) protein is Glycine dehydrogenase (decarboxylating).